The sequence spans 479 residues: Glutamate--tRNA ligase (479 aa).

Positions 21-31 (PSPTGYLHVGG) match the 'HIGH' region motif. The 'KMSKS' region signature appears at 248–252 (KLSKR). Lysine 251 contributes to the ATP binding site.

It belongs to the class-I aminoacyl-tRNA synthetase family. Glutamate--tRNA ligase type 1 subfamily. As to quaternary structure, monomer.

It localises to the cytoplasm. It carries out the reaction tRNA(Glu) + L-glutamate + ATP = L-glutamyl-tRNA(Glu) + AMP + diphosphate. In terms of biological role, catalyzes the attachment of glutamate to tRNA(Glu) in a two-step reaction: glutamate is first activated by ATP to form Glu-AMP and then transferred to the acceptor end of tRNA(Glu). In Actinobacillus pleuropneumoniae serotype 7 (strain AP76), this protein is Glutamate--tRNA ligase.